Reading from the N-terminus, the 348-residue chain is Protein RecA (348 aa).

Residue 66 to 73 (GPESSGKT) coordinates ATP.

Belongs to the RecA family.

Its subcellular location is the cytoplasm. Can catalyze the hydrolysis of ATP in the presence of single-stranded DNA, the ATP-dependent uptake of single-stranded DNA by duplex DNA, and the ATP-dependent hybridization of homologous single-stranded DNAs. It interacts with LexA causing its activation and leading to its autocatalytic cleavage. The chain is Protein RecA from Neisseria meningitidis serogroup C / serotype 2a (strain ATCC 700532 / DSM 15464 / FAM18).